Here is a 304-residue protein sequence, read N- to C-terminus: MSEKNLLTALSKMITEQRNPNSMNIDQLSALELVKVINQEDKQVPLAVEKCLAQIAQAVEKIVQAFQNGGRLVYIGAGTSGRLGVLDASECPPTYGVPPEIVVGIIAGGERALRHPIEGAEDNTERGKADLQAVNFSQKDVLVGIAASGRTPYVIGALEYAKSLGATTVSIASNPNSAMAQIAEIAIDTVVGPEVLTGSSRMKSGTAQKLVLNMLTTASMVMIGKCYSNLMVDVQASNEKLKARAIKIVMEATECDRTVAENTLKIAENNAKLAIMMILSDSDKTTAEQLLSKHHGKLRQALVN.

Residues 62-225 enclose the SIS domain; sequence IVQAFQNGGR…TTASMVMIGK (164 aa). The active-site Proton donor is the Glu-90. The active site involves Glu-121.

Belongs to the GCKR-like family. MurNAc-6-P etherase subfamily. As to quaternary structure, homodimer.

The catalysed reaction is N-acetyl-D-muramate 6-phosphate + H2O = N-acetyl-D-glucosamine 6-phosphate + (R)-lactate. It functions in the pathway amino-sugar metabolism; 1,6-anhydro-N-acetylmuramate degradation. The protein operates within amino-sugar metabolism; N-acetylmuramate degradation. It participates in cell wall biogenesis; peptidoglycan recycling. Specifically catalyzes the cleavage of the D-lactyl ether substituent of MurNAc 6-phosphate, producing GlcNAc 6-phosphate and D-lactate. Together with AnmK, is also required for the utilization of anhydro-N-acetylmuramic acid (anhMurNAc) either imported from the medium or derived from its own cell wall murein, and thus plays a role in cell wall recycling. This is N-acetylmuramic acid 6-phosphate etherase from Actinobacillus pleuropneumoniae serotype 5b (strain L20).